The sequence spans 330 residues: MARLYYDTDANLEPLADKTVAIIGYGSQGHAHALNLRDSGVQVIVGLYPGSPSWPKAEQDGLMVKTVADAAAAADWVMILLPDEVQKAVFQGEIRPHLQPGNVLLFAHGFNIHFGQIQPPANVDVIMVAPKGPGHLVRRTYQAGEGVPCLFAVYQDASGMARERAMAYAKAIGGTRAGILETTFREETETDLFGEQVVLCGGLTALIKAGFETLVEAGYQPELAYFECLHEVKLIVDLIVEGGLEKMRHSISNTAEYGDYTRGPRIITEQTRAEMKRILAEIQSGQFAREFVLENQAGKPGLTAMRRREAEHPIEQVGRELRAMFSWLKK.

The KARI N-terminal Rossmann domain maps to 2-182 (ARLYYDTDAN…GGTRAGILET (181 aa)). Residues 25 to 28 (YGSQ), S51, S53, and 83 to 86 (DEVQ) each bind NADP(+). The active site involves H108. G134 contacts NADP(+). Residues 183-328 (TFREETETDL…RELRAMFSWL (146 aa)) enclose the KARI C-terminal knotted domain. Positions 191, 195, 227, and 231 each coordinate Mg(2+). Residue S252 participates in substrate binding.

Belongs to the ketol-acid reductoisomerase family. Mg(2+) serves as cofactor.

The catalysed reaction is (2R)-2,3-dihydroxy-3-methylbutanoate + NADP(+) = (2S)-2-acetolactate + NADPH + H(+). The enzyme catalyses (2R,3R)-2,3-dihydroxy-3-methylpentanoate + NADP(+) = (S)-2-ethyl-2-hydroxy-3-oxobutanoate + NADPH + H(+). The protein operates within amino-acid biosynthesis; L-isoleucine biosynthesis; L-isoleucine from 2-oxobutanoate: step 2/4. Its pathway is amino-acid biosynthesis; L-valine biosynthesis; L-valine from pyruvate: step 2/4. Functionally, involved in the biosynthesis of branched-chain amino acids (BCAA). Catalyzes an alkyl-migration followed by a ketol-acid reduction of (S)-2-acetolactate (S2AL) to yield (R)-2,3-dihydroxy-isovalerate. In the isomerase reaction, S2AL is rearranged via a Mg-dependent methyl migration to produce 3-hydroxy-3-methyl-2-ketobutyrate (HMKB). In the reductase reaction, this 2-ketoacid undergoes a metal-dependent reduction by NADPH to yield (R)-2,3-dihydroxy-isovalerate. The chain is Ketol-acid reductoisomerase (NADP(+)) from Synechococcus sp. (strain JA-2-3B'a(2-13)) (Cyanobacteria bacterium Yellowstone B-Prime).